The chain runs to 120 residues: Prophage bactoprenol-linked glucose translocase homolog (120 aa).

The Cytoplasmic segment spans residues 1-9 (MLKLFAKYT). Residues 10–30 (SIGVLNTLIHWVVFGVCIYVA) traverse the membrane as a helical segment. Topologically, residues 31 to 33 (HTN) are periplasmic. A helical transmembrane segment spans residues 34–54 (QALANFAGFVVAVSFSFFANA). At 55–64 (KFTFKASTTT) the chain is on the cytoplasmic side. Residues 65 to 85 (MRYMLYVGFMGTLSATVGWAA) traverse the membrane as a helical segment. The Periplasmic portion of the chain corresponds to 86 to 88 (DRC). Residues 89–109 (ALPPMITLVTFSAISLVCGFV) traverse the membrane as a helical segment. Residues 110-120 (YSKFIVFRDAK) are Cytoplasmic-facing.

The protein belongs to the GtrA family.

The protein localises to the cell inner membrane. Its function is as follows. Involved in O antigen modification. Involved in the translocation of bactoprenol-linked glucose across the cytoplasmic membrane. This is Prophage bactoprenol-linked glucose translocase homolog (yfdG) from Escherichia coli (strain K12).